A 484-amino-acid polypeptide reads, in one-letter code: Threonine synthase-like 2 (484 aa).

The residue at position 113 (lysine 113) is an N6-(pyridoxal phosphate)lysine.

It belongs to the threonine synthase family. It depends on pyridoxal 5'-phosphate as a cofactor.

Acts as a catabolic phospho-lyase on both gamma- and beta-phosphorylated substrates. Degrades O-phospho-threonine (PThr) to alpha-ketobutyrate, ammonia and phosphate. The chain is Threonine synthase-like 2 (THNSL2) from Pongo abelii (Sumatran orangutan).